We begin with the raw amino-acid sequence, 338 residues long: Calcium uniporter protein 4, mitochondrial (338 aa).

The transit peptide at 1-36 (MVMMKKLLSNRLFNMSKTASQSLMNCRTSSSSSLAM) directs the protein to the mitochondrion. A helical membrane pass occupies residues 233-253 (LWAGLGYLIIQTAGFMRLTFW). Positions 257–265 (WDVMEPICF) match the Selectivity filter motif. Glutamate 261 lines the Ca(2+) pocket. The helical transmembrane segment at 263-280 (ICFYVSSVYFMAGYTFFL) threads the bilayer.

The protein belongs to the MCU (TC 1.A.77) family.

The protein resides in the mitochondrion inner membrane. It carries out the reaction Ca(2+)(in) = Ca(2+)(out). Its function is as follows. Mitochondrial inner membrane calcium uniporter that mediates calcium uptake into mitochondria. Constitutes a pore-forming and calcium-conducting subunit. Mitochondrial calcium homeostasis plays key roles in cellular physiology and regulates cell bioenergetics, cytoplasmic calcium signals and activation of cell death pathways. This Arabidopsis thaliana (Mouse-ear cress) protein is Calcium uniporter protein 4, mitochondrial.